The primary structure comprises 93 residues: uncharacterized protein (93 aa).

This is an uncharacterized protein from Sulfolobus islandicus filamentous virus (isolate Iceland/Hveragerdi) (SIFV).